The sequence spans 224 residues: Prophage repressor CohE (224 aa).

This Escherichia coli (strain K12) protein is Prophage repressor CohE (cohE).